A 612-amino-acid polypeptide reads, in one-letter code: Dihydroxy-acid dehydratase (612 aa).

Asp-81 is a Mg(2+) binding site. A [2Fe-2S] cluster-binding site is contributed by Cys-122. Mg(2+)-binding residues include Asp-123 and Lys-124. Position 124 is an N6-carboxylysine (Lys-124). Cys-193 contributes to the [2Fe-2S] cluster binding site. Mg(2+) is bound at residue Glu-489. Catalysis depends on Ser-515, which acts as the Proton acceptor.

This sequence belongs to the IlvD/Edd family. As to quaternary structure, homodimer. It depends on [2Fe-2S] cluster as a cofactor. Requires Mg(2+) as cofactor.

The catalysed reaction is (2R)-2,3-dihydroxy-3-methylbutanoate = 3-methyl-2-oxobutanoate + H2O. It catalyses the reaction (2R,3R)-2,3-dihydroxy-3-methylpentanoate = (S)-3-methyl-2-oxopentanoate + H2O. Its pathway is amino-acid biosynthesis; L-isoleucine biosynthesis; L-isoleucine from 2-oxobutanoate: step 3/4. It participates in amino-acid biosynthesis; L-valine biosynthesis; L-valine from pyruvate: step 3/4. Its function is as follows. Functions in the biosynthesis of branched-chain amino acids. Catalyzes the dehydration of (2R,3R)-2,3-dihydroxy-3-methylpentanoate (2,3-dihydroxy-3-methylvalerate) into 2-oxo-3-methylpentanoate (2-oxo-3-methylvalerate) and of (2R)-2,3-dihydroxy-3-methylbutanoate (2,3-dihydroxyisovalerate) into 2-oxo-3-methylbutanoate (2-oxoisovalerate), the penultimate precursor to L-isoleucine and L-valine, respectively. The polypeptide is Dihydroxy-acid dehydratase (Xanthomonas axonopodis pv. citri (strain 306)).